We begin with the raw amino-acid sequence, 209 residues long: Uracil phosphoribosyltransferase (209 aa).

Residues arginine 79, arginine 104, and 131–139 (DPMLATGGS) contribute to the 5-phospho-alpha-D-ribose 1-diphosphate site. Residues isoleucine 194 and 199–201 (GDA) each bind uracil. Aspartate 200 contributes to the 5-phospho-alpha-D-ribose 1-diphosphate binding site.

This sequence belongs to the UPRTase family. It depends on Mg(2+) as a cofactor.

It carries out the reaction UMP + diphosphate = 5-phospho-alpha-D-ribose 1-diphosphate + uracil. It participates in pyrimidine metabolism; UMP biosynthesis via salvage pathway; UMP from uracil: step 1/1. With respect to regulation, allosterically activated by GTP. In terms of biological role, catalyzes the conversion of uracil and 5-phospho-alpha-D-ribose 1-diphosphate (PRPP) to UMP and diphosphate. The sequence is that of Uracil phosphoribosyltransferase from Brevibacillus brevis (strain 47 / JCM 6285 / NBRC 100599).